The chain runs to 86 residues: UPF0213 protein OB0043 (86 aa).

The region spanning 3-80 (EQHYVYILRC…LPRFEKLKLI (78 aa)) is the GIY-YIG domain.

Belongs to the UPF0213 family.

This Oceanobacillus iheyensis (strain DSM 14371 / CIP 107618 / JCM 11309 / KCTC 3954 / HTE831) protein is UPF0213 protein OB0043.